A 160-amino-acid chain; its full sequence is Transcriptional repressor NrdR (160 aa).

The span at 1 to 11 shows a compositional bias: polar residues; it reads MRCPSCNSLDT. The tract at residues 1-20 is disordered; the sequence is MRCPSCNSLDTQVKDSRPTE. A zinc finger lies at 3–34; that stretch reads CPSCNSLDTQVKDSRPTEDSAVIRRRRVCMAC. An ATP-cone domain is found at 49 to 139; the sequence is LTVIKRNGRR…VYRNFREAKD (91 aa).

Belongs to the NrdR family. Requires Zn(2+) as cofactor.

In terms of biological role, negatively regulates transcription of bacterial ribonucleotide reductase nrd genes and operons by binding to NrdR-boxes. The sequence is that of Transcriptional repressor NrdR from Nitrobacter hamburgensis (strain DSM 10229 / NCIMB 13809 / X14).